The chain runs to 35 residues: Thionin NsW1 (35 aa).

Disulfide bonds link Cys-4/Cys-32, Cys-12/Cys-30, and Cys-16/Cys-26.

Post-translationally, contains 4 disulfide bonds.

It localises to the secreted. Its function is as follows. Antimicrobial peptide disrupting membranes. Has antibacterial against Gram-positive bacteria S.aureus (MIC=6.5 uM) and B.subtilis (MIC=3.25 uM) but not against Gram-negative bacterium E.coli. Has antifungal activity against C.albicans (MIC=1.63 uM). The chain is Thionin NsW1 from Nigella sativa (Black cumin).